The sequence spans 283 residues: Bifunctional protein FolD (283 aa).

Residues 166 to 168 (GRS) and Ser191 contribute to the NADP(+) site.

It belongs to the tetrahydrofolate dehydrogenase/cyclohydrolase family. Homodimer.

It catalyses the reaction (6R)-5,10-methylene-5,6,7,8-tetrahydrofolate + NADP(+) = (6R)-5,10-methenyltetrahydrofolate + NADPH. The enzyme catalyses (6R)-5,10-methenyltetrahydrofolate + H2O = (6R)-10-formyltetrahydrofolate + H(+). The protein operates within one-carbon metabolism; tetrahydrofolate interconversion. Its function is as follows. Catalyzes the oxidation of 5,10-methylenetetrahydrofolate to 5,10-methenyltetrahydrofolate and then the hydrolysis of 5,10-methenyltetrahydrofolate to 10-formyltetrahydrofolate. This chain is Bifunctional protein FolD, found in Pediococcus pentosaceus (strain ATCC 25745 / CCUG 21536 / LMG 10740 / 183-1w).